The sequence spans 208 residues: 3-demethoxyubiquinol 3-hydroxylase (208 aa).

6 residues coordinate Fe cation: E57, E87, H90, E139, E171, and H174.

It belongs to the COQ7 family. Fe cation serves as cofactor.

It is found in the cell membrane. It catalyses the reaction a 5-methoxy-2-methyl-3-(all-trans-polyprenyl)benzene-1,4-diol + AH2 + O2 = a 3-demethylubiquinol + A + H2O. The protein operates within cofactor biosynthesis; ubiquinone biosynthesis. Its function is as follows. Catalyzes the hydroxylation of 2-nonaprenyl-3-methyl-6-methoxy-1,4-benzoquinol during ubiquinone biosynthesis. The sequence is that of 3-demethoxyubiquinol 3-hydroxylase from Herbaspirillum seropedicae.